The primary structure comprises 452 residues: Retinoid-inducible serine carboxypeptidase (452 aa).

The signal sequence occupies residues 1 to 28 (MELSRRICLVRLWLLLLSFLLGFSAGSA). Asn-64, Asn-102, and Asn-126 each carry an N-linked (GlcNAc...) asparagine glycan. The active site involves Ser-167. Asn-192 and Asn-362 each carry an N-linked (GlcNAc...) asparagine glycan. Active-site residues include Asp-371 and His-431.

The protein belongs to the peptidase S10 family. Highly expressed in aorta, bladder, and kidney with much lower levels in all other tissues analyzed. Expression in kidney is restricted to proximal convoluted tubules.

The protein localises to the secreted. In terms of biological role, may be involved in vascular wall and kidney homeostasis. In Rattus norvegicus (Rat), this protein is Retinoid-inducible serine carboxypeptidase (Scpep1).